A 523-amino-acid chain; its full sequence is 2-isopropylmalate synthase (523 aa).

The Pyruvate carboxyltransferase domain occupies 5-267 (VIIFDTTLRD…HTNINHHEIW (263 aa)). Mn(2+) is bound by residues Asp14, His202, His204, and Asn238. The tract at residues 392–523 (RLDYFSVQSG…QNKENNKETV (132 aa)) is regulatory domain.

It belongs to the alpha-IPM synthase/homocitrate synthase family. LeuA type 1 subfamily. In terms of assembly, homodimer. It depends on Mn(2+) as a cofactor.

The protein localises to the cytoplasm. It carries out the reaction 3-methyl-2-oxobutanoate + acetyl-CoA + H2O = (2S)-2-isopropylmalate + CoA + H(+). The protein operates within amino-acid biosynthesis; L-leucine biosynthesis; L-leucine from 3-methyl-2-oxobutanoate: step 1/4. Functionally, catalyzes the condensation of the acetyl group of acetyl-CoA with 3-methyl-2-oxobutanoate (2-ketoisovalerate) to form 3-carboxy-3-hydroxy-4-methylpentanoate (2-isopropylmalate). This is 2-isopropylmalate synthase from Salmonella choleraesuis (strain SC-B67).